The following is a 324-amino-acid chain: Beta-ketoacyl-[acyl-carrier-protein] synthase III (324 aa).

Residues cysteine 112 and histidine 249 contribute to the active site. Residues 250-254 (QANRR) form an ACP-binding region. The active site involves asparagine 279.

The protein belongs to the thiolase-like superfamily. FabH family. In terms of assembly, homodimer.

The protein localises to the cytoplasm. The enzyme catalyses malonyl-[ACP] + acetyl-CoA + H(+) = 3-oxobutanoyl-[ACP] + CO2 + CoA. The protein operates within lipid metabolism; fatty acid biosynthesis. Functionally, catalyzes the condensation reaction of fatty acid synthesis by the addition to an acyl acceptor of two carbons from malonyl-ACP. Catalyzes the first condensation reaction which initiates fatty acid synthesis and may therefore play a role in governing the total rate of fatty acid production. Possesses both acetoacetyl-ACP synthase and acetyl transacylase activities. Its substrate specificity determines the biosynthesis of branched-chain and/or straight-chain of fatty acids. The sequence is that of Beta-ketoacyl-[acyl-carrier-protein] synthase III from Streptococcus pyogenes serotype M1.